The sequence spans 679 residues: UvrABC system protein B (679 aa).

Residues 25 to 190 enclose the Helicase ATP-binding domain; the sequence is EGVNQGQRYQ…SRNDFDITRG (166 aa). 38-45 is a binding site for ATP; the sequence is GATGTGKT. A Beta-hairpin motif is present at residues 91–114; the sequence is YYDYYQPEAYVPVSDTYIAKTASI. One can recognise a Helicase C-terminal domain in the interval 429–591; sequence QVDDLLAEIR…IVPRPAGKRA (163 aa). The UVR domain maps to 639–674; that stretch reads PELIDQLETKMKEAAKNLNFEEAASLRDRIKKFRQK.

This sequence belongs to the UvrB family. Forms a heterotetramer with UvrA during the search for lesions. Interacts with UvrC in an incision complex.

Its subcellular location is the cytoplasm. The UvrABC repair system catalyzes the recognition and processing of DNA lesions. A damage recognition complex composed of 2 UvrA and 2 UvrB subunits scans DNA for abnormalities. Upon binding of the UvrA(2)B(2) complex to a putative damaged site, the DNA wraps around one UvrB monomer. DNA wrap is dependent on ATP binding by UvrB and probably causes local melting of the DNA helix, facilitating insertion of UvrB beta-hairpin between the DNA strands. Then UvrB probes one DNA strand for the presence of a lesion. If a lesion is found the UvrA subunits dissociate and the UvrB-DNA preincision complex is formed. This complex is subsequently bound by UvrC and the second UvrB is released. If no lesion is found, the DNA wraps around the other UvrB subunit that will check the other stand for damage. The chain is UvrABC system protein B from Prochlorococcus marinus (strain MIT 9303).